The chain runs to 313 residues: Olfactory receptor 56A5 (313 aa).

At 1 to 33 (MTLPSNNSTSPVFEFFLICFPSFQSWQHWLSLP) the chain is on the extracellular side. N-linked (GlcNAc...) asparagine glycosylation is found at Asn6 and Asn7. The helical transmembrane segment at 34-54 (LSLLFLLAMGANATLLITIYL) threads the bilayer. Residues 55 to 67 (EASLHQPLYYLLS) lie on the Cytoplasmic side of the membrane. Residues 68-88 (LLSLLDIVLCLTVIPKVLAIF) traverse the membrane as a helical segment. Residues 89 to 100 (WFDLRSISFPAC) lie on the Extracellular side of the membrane. Cys100 and Cys182 are disulfide-bonded. The chain crosses the membrane as a helical span at residues 101 to 121 (FLQVFIMNSFLTMESCTFMIM). Topologically, residues 122–146 (AYDRYVAICKPLQYSSIITDQFVAR) are cytoplasmic. A helical transmembrane segment spans residues 147 to 167 (AAIFVVARNGLLTMPIPILSS). Over 168 to 203 (RLRYCAGHIIKNCICTNVSVSKLSCDDITLNQSYQF) the chain is Extracellular. N-linked (GlcNAc...) asparagine glycans are attached at residues Asn184 and Asn198. The helical transmembrane segment at 204 to 224 (VIGWTLLGSDLILIVLSYFFI) threads the bilayer. Over 225 to 246 (LKTVLRIKGEGDMAKALGTCGS) the chain is Cytoplasmic. The helical transmembrane segment at 247 to 267 (HFILILFFTTVLLVLVITNLA) threads the bilayer. The Extracellular segment spans residues 268–276 (RKRIPPDVP). The helical transmembrane segment at 277–297 (ILLNILHHLIPPALNPIVYGV) threads the bilayer. Over 298–313 (RTKEIKQGIQNLLRRL) the chain is Cytoplasmic.

It belongs to the G-protein coupled receptor 1 family.

The protein localises to the cell membrane. In terms of biological role, odorant receptor. This is Olfactory receptor 56A5 (OR56A5) from Homo sapiens (Human).